We begin with the raw amino-acid sequence, 103 residues long: uncharacterized protein (103 aa).

A helical transmembrane segment spans residues 35 to 57 (PFVSMFQTFLEVLTATVLAFTAY).

Its subcellular location is the host membrane. This is an uncharacterized protein from Acidianus bottle-shaped virus (isolate Italy/Pozzuoli) (ABV).